The primary structure comprises 612 residues: Methionine--tRNA ligase (612 aa).

The 'HIGH' region motif lies at 12-22 (PYANGPRHIGH). Positions 144, 147, 157, and 160 each coordinate Zn(2+). The 'KMSKS' region motif lies at 348–352 (KFSSS). Residue Ser351 participates in ATP binding.

This sequence belongs to the class-I aminoacyl-tRNA synthetase family. MetG type 1 subfamily. In terms of assembly, monomer. Zn(2+) serves as cofactor.

It is found in the cytoplasm. It carries out the reaction tRNA(Met) + L-methionine + ATP = L-methionyl-tRNA(Met) + AMP + diphosphate. Is required not only for elongation of protein synthesis but also for the initiation of all mRNA translation through initiator tRNA(fMet) aminoacylation. This is Methionine--tRNA ligase from Corynebacterium kroppenstedtii (strain DSM 44385 / JCM 11950 / CIP 105744 / CCUG 35717).